The primary structure comprises 361 residues: Probable dual-specificity RNA methyltransferase RlmN (361 aa).

E104 acts as the Proton acceptor in catalysis. One can recognise a Radical SAM core domain in the interval 110–343 (HEYGNSVCVT…VTIRREQGHD (234 aa)). The cysteines at positions 117 and 348 are disulfide-linked. [4Fe-4S] cluster contacts are provided by C124, C128, and C131. Residues 174–175 (GE), S206, 229–231 (SLH), and N305 contribute to the S-adenosyl-L-methionine site. Residue C348 is the S-methylcysteine intermediate of the active site.

The protein belongs to the radical SAM superfamily. RlmN family. [4Fe-4S] cluster serves as cofactor.

The protein localises to the cytoplasm. The catalysed reaction is adenosine(2503) in 23S rRNA + 2 reduced [2Fe-2S]-[ferredoxin] + 2 S-adenosyl-L-methionine = 2-methyladenosine(2503) in 23S rRNA + 5'-deoxyadenosine + L-methionine + 2 oxidized [2Fe-2S]-[ferredoxin] + S-adenosyl-L-homocysteine. It catalyses the reaction adenosine(37) in tRNA + 2 reduced [2Fe-2S]-[ferredoxin] + 2 S-adenosyl-L-methionine = 2-methyladenosine(37) in tRNA + 5'-deoxyadenosine + L-methionine + 2 oxidized [2Fe-2S]-[ferredoxin] + S-adenosyl-L-homocysteine. In terms of biological role, specifically methylates position 2 of adenine 2503 in 23S rRNA and position 2 of adenine 37 in tRNAs. The chain is Probable dual-specificity RNA methyltransferase RlmN from Bacillus licheniformis (strain ATCC 14580 / DSM 13 / JCM 2505 / CCUG 7422 / NBRC 12200 / NCIMB 9375 / NCTC 10341 / NRRL NRS-1264 / Gibson 46).